Consider the following 74-residue polypeptide: Conotoxin AbVII (74 aa).

Residues 1–17 (VLIIAVLFLTACQLTTA) form the signal peptide. A propeptide spanning residues 18–40 (ETSSRGKQKHRALRSTDKNSRMT) is cleaved from the precursor. Residues 19–41 (TSSRGKQKHRALRSTDKNSRMTK) form a disordered region. 3 cysteine pairs are disulfide-bonded: C43–C57, C50–C61, and C56–C68.

It belongs to the conotoxin O1 superfamily. In terms of tissue distribution, expressed by the venom duct.

It is found in the secreted. The chain is Conotoxin AbVII from Conus abbreviatus (Abbreviated cone).